Reading from the N-terminus, the 407-residue chain is Endo-1,4-beta-xylanase (407 aa).

The first 28 residues, 1–28, serve as a signal peptide directing secretion; sequence MRNVVRKPLTIGLALTLLLPMGMTATSA. Residues 42 to 406 enclose the GH10 domain; that stretch reads ALNAPQLDQR…KPAYWAIIDH (365 aa). The Proton donor role is filled by glutamate 187. Glutamate 293 (nucleophile) is an active-site residue.

Belongs to the glycosyl hydrolase 10 (cellulase F) family.

It is found in the secreted. The enzyme catalyses Endohydrolysis of (1-&gt;4)-beta-D-xylosidic linkages in xylans.. Its pathway is glycan degradation; xylan degradation. This is Endo-1,4-beta-xylanase from Geobacillus stearothermophilus (Bacillus stearothermophilus).